A 264-amino-acid chain; its full sequence is ATP synthase subunit a (264 aa).

Transmembrane regions (helical) follow at residues 39-59 (LDTLIISVVLGALFILIFYIV), 97-117 (VAPLALTIFIWVFLMNFMDLV), 139-159 (TADPTLTFAMSITVFVLVIFY), 205-225 (LFGNLFAGELIFILIALLPWW), and 239-259 (LLVITVQAFIFMMLTVVYISL).

The protein belongs to the ATPase A chain family. As to quaternary structure, F-type ATPases have 2 components, CF(1) - the catalytic core - and CF(0) - the membrane proton channel. CF(1) has five subunits: alpha(3), beta(3), gamma(1), delta(1), epsilon(1). CF(0) has three main subunits: a(1), b(2) and c(9-12). The alpha and beta chains form an alternating ring which encloses part of the gamma chain. CF(1) is attached to CF(0) by a central stalk formed by the gamma and epsilon chains, while a peripheral stalk is formed by the delta and b chains.

The protein localises to the cell inner membrane. Its function is as follows. Key component of the proton channel; it plays a direct role in the translocation of protons across the membrane. In Coxiella burnetii (strain RSA 331 / Henzerling II), this protein is ATP synthase subunit a.